Reading from the N-terminus, the 59-residue chain is Metallothionein-1B (59 aa).

The tract at residues 1–29 (MPGPCCNDKCVCQEGGCKAGCQCTSCRCS) is beta. Residues C5, C6, C10, C17, C21, C23, C26, C28, C31, C34, C38, C40, C46, C50, C54, C56, and C57 each contribute to the a divalent metal cation site. An alpha region spans residues 30 to 59 (PCQKCTSGCKCATKEECSKTCTKPCSCCPK).

The protein belongs to the metallothionein superfamily. Type 3 family.

In terms of biological role, binds six divalent metal ions. Known to bind copper and cadmium. The chain is Metallothionein-1B from Callinectes sapidus (Blue crab).